Reading from the N-terminus, the 162-residue chain is Sorting nexin-12 (162 aa).

Residues 1–20 (MSDTAVADTRRLNSKPQDLT) are disordered. S2 is subject to N-acetylserine. Y23 is subject to Phosphotyrosine. Residues 28–152 (NFLEIDIFNP…HMFLQEEAID (125 aa)) enclose the PX domain. R71, S73, K96, and R119 together coordinate a 1,2-diacyl-sn-glycero-3-phospho-(1D-myo-inositol-3-phosphate). S73 bears the Phosphoserine mark.

This sequence belongs to the sorting nexin family.

The protein resides in the membrane. Its function is as follows. May be involved in several stages of intracellular trafficking. The chain is Sorting nexin-12 (SNX12) from Homo sapiens (Human).